A 400-amino-acid polypeptide reads, in one-letter code: WD repeat and FYVE domain-containing protein 2 (400 aa).

WD repeat units lie at residues 22-61 (GSQE…QYWP), 66-105 (AMPS…NKMT), 112-150 (AHQS…QRLG), 153-192 (RTSA…CTLV), 197-236 (GHTG…GTAI), and 240-279 (GHND…QETP). The FYVE-type zinc finger occupies 281-352 (WLDSDSCQKC…VCDSCHEAIT (72 aa)). The Zn(2+) site is built by Cys-287, Cys-290, Cys-314, Cys-317, Cys-322, Cys-325, Cys-344, and Cys-347. One copy of the WD 7 repeat lies at 364–399 (DSKHNIVHVHFDATRGWLLTSGTDKVIKLWDMTPVV).

In terms of assembly, homodimer. Interacts (via WD repeats 1-3) with AKT1, AKT2, PRKCZ and PRKCI. Interacts with VAMP2. Forms a complex with VAMP2 and PRKCZ. Interacts with FOXO1. Forms a complex with AKT1 and FOXO1.

It localises to the endosome. It is found in the early endosome. Its subcellular location is the cytoplasm. In terms of biological role, acts in an adapter protein-like fashion to mediate the interaction between the kinase PRKCZ and its substrate VAMP2 and increases the PRKCZ-dependent phosphorylation of VAMP2. Positively regulates adipocyte differentiation, by facilitating the phosphorylation and thus inactivation of the anti-adipogenetic transcription factor FOXO1 by the kinase AKT1. Plays a role in endosomal control of AKT2 signaling; required for insulin-stimulated AKT2 phosphorylation and glucose uptake and insulin-stimulated phosphorylation of AKT2 substrates. Participates in transferrin receptor endocytosis. The protein is WD repeat and FYVE domain-containing protein 2 (WDFY2) of Homo sapiens (Human).